We begin with the raw amino-acid sequence, 294 residues long: Urease accessory protein UreD 1 (294 aa).

Positions 1-20 (MALSLDDLPEKPAPAEPVSA) are disordered.

The protein belongs to the UreD family. As to quaternary structure, ureD, UreF and UreG form a complex that acts as a GTP-hydrolysis-dependent molecular chaperone, activating the urease apoprotein by helping to assemble the nickel containing metallocenter of UreC. The UreE protein probably delivers the nickel.

It localises to the cytoplasm. Its function is as follows. Required for maturation of urease via the functional incorporation of the urease nickel metallocenter. The polypeptide is Urease accessory protein UreD 1 (Methylorubrum populi (strain ATCC BAA-705 / NCIMB 13946 / BJ001) (Methylobacterium populi)).